We begin with the raw amino-acid sequence, 590 residues long: V-type ATP synthase alpha chain (590 aa).

Residue 232–239 (GPFGSGKT) participates in ATP binding.

Belongs to the ATPase alpha/beta chains family.

The enzyme catalyses ATP + H2O + 4 H(+)(in) = ADP + phosphate + 5 H(+)(out). In terms of biological role, produces ATP from ADP in the presence of a proton gradient across the membrane. The V-type alpha chain is a catalytic subunit. This is V-type ATP synthase alpha chain from Thermoanaerobacter sp. (strain X514).